A 242-amino-acid chain; its full sequence is Myb-related protein MYBAS2 (242 aa).

HTH myb-type domains are found at residues 5 to 61 (REEI…HPGL) and 62 to 112 (KRGR…RKKA). The H-T-H motif DNA-binding region spans 33–57 (WDFIAKVSGLNRTGKSCRLRWVNYL). The short motif at 62–65 (KRGR) is the Bipartite nuclear localization signal 1 element. A DNA-binding region (H-T-H motif) is located at residues 85 to 108 (WSRIARRLPGRTDNEIKNYWRTHM). The Bipartite nuclear localization signal 2 motif lies at 109–117 (RKKAQERKS). Residues 110-133 (KKAQERKSNMSPSSSSSSLTYQSC) form a disordered region. Low complexity predominate over residues 118–133 (NMSPSSSSSSLTYQSC).

The protein localises to the nucleus. Functionally, transcription factor. This Oryza sativa subsp. japonica (Rice) protein is Myb-related protein MYBAS2 (MYBAS2).